A 116-amino-acid chain; its full sequence is MHTSELLKHIYDINLSYLLLAQRLIVQDKASAMFRLGINEEMATTLAALTLPQMVKLAETNQLVCHFRFDSHQTITLLTQDSRVDDLQQIHTGIMLSTRLLNDVNQPEEALRKKRA.

The protein belongs to the FlhD family. As to quaternary structure, homodimer; disulfide-linked. Forms a heterohexamer composed of two FlhC and four FlhD subunits. Each FlhC binds a FlhD dimer, forming a heterotrimer, and a hexamer assembles by dimerization of two heterotrimers.

Its subcellular location is the cytoplasm. In terms of biological role, functions in complex with FlhC as a master transcriptional regulator that regulates transcription of several flagellar and non-flagellar operons by binding to their promoter region. Activates expression of class 2 flagellar genes, including fliA, which is a flagellum-specific sigma factor that turns on the class 3 genes. Also regulates genes whose products function in a variety of physiological pathways. This chain is Flagellar transcriptional regulator FlhD, found in Escherichia coli O157:H7.